The sequence spans 492 residues: Catalase isozyme 1 (492 aa).

Catalysis depends on residues His65 and Asn138. A heme-binding site is contributed by Tyr348.

Belongs to the catalase family. Homotetramer. It depends on heme as a cofactor.

The protein localises to the peroxisome. The catalysed reaction is 2 H2O2 = O2 + 2 H2O. Functionally, occurs in almost all aerobically respiring organisms and serves to protect cells from the toxic effects of hydrogen peroxide. This chain is Catalase isozyme 1 (CAT1), found in Gossypium hirsutum (Upland cotton).